Reading from the N-terminus, the 1165-residue chain is Pesticidal crystal protein Cry1Da (1165 aa).

This sequence belongs to the delta endotoxin family.

In terms of biological role, promotes colloidosmotic lysis by binding to the midgut epithelial cells of many lepidopteran larvae. In Bacillus thuringiensis subsp. aizawai, this protein is Pesticidal crystal protein Cry1Da (cry1Da).